Reading from the N-terminus, the 420-residue chain is UDP-N-acetylglucosamine 1-carboxyvinyltransferase (420 aa).

22–23 (KN) provides a ligand contact to phosphoenolpyruvate. R92 contributes to the UDP-N-acetyl-alpha-D-glucosamine binding site. Catalysis depends on C116, which acts as the Proton donor. Position 116 is a 2-(S-cysteinyl)pyruvic acid O-phosphothioketal (C116). UDP-N-acetyl-alpha-D-glucosamine-binding positions include 121-125 (RPIDL), D307, and L329.

Belongs to the EPSP synthase family. MurA subfamily.

Its subcellular location is the cytoplasm. The catalysed reaction is phosphoenolpyruvate + UDP-N-acetyl-alpha-D-glucosamine = UDP-N-acetyl-3-O-(1-carboxyvinyl)-alpha-D-glucosamine + phosphate. It functions in the pathway cell wall biogenesis; peptidoglycan biosynthesis. In terms of biological role, cell wall formation. Adds enolpyruvyl to UDP-N-acetylglucosamine. This is UDP-N-acetylglucosamine 1-carboxyvinyltransferase from Nitratiruptor sp. (strain SB155-2).